The chain runs to 672 residues: Synaptotagmin-like protein 4 (672 aa).

The RabBD domain maps to 4–122; sequence ILDLSFLSEM…KATGDWFYDQ (119 aa). The segment at 63–105 adopts an FYVE-type zinc-finger fold; it reads CARCQEGLGRLISKSNTCVGCNHLVCRECRVLESNGSWRCKVC. Residues 199 to 222 are disordered; that stretch reads SESLDSYTADSDSTSRRDSLDKSG. Residues Ser201, Ser204, Ser217, Ser221, and Ser274 each carry the phosphoserine modification. A C2 1 domain is found at 357–479; the sequence is VTGKIAFSLK…KLDKKLDHCL (123 aa). The residue at position 489 (Ser489) is a Phosphoserine. In terms of domain architecture, C2 2 spans 508–634; that stretch reads PASKLPVGGD…ISSGEVVDWM (127 aa).

As to quaternary structure, part of a ternary complex containing STX1A and RAB27A. Can bind both dominant negative and dominant active mutants of RAB27A. Binds STXBP1, RAB3A, RAB8A and RAB27B. Interacts with MYO5A. As to expression, detected in insulin-secreting cell lines.

The protein localises to the membrane. The protein resides in the cytoplasmic vesicle. It is found in the secretory vesicle membrane. Modulates exocytosis of dense-core granules and secretion of hormones in the pancreas and the pituitary. Interacts with vesicles containing negatively charged phospholipids in a Ca(2+)-independent manner. The chain is Synaptotagmin-like protein 4 (Sytl4) from Rattus norvegicus (Rat).